Here is a 770-residue protein sequence, read N- to C-terminus: MPRLLTKRGCWITLAAAPFLLFLAAWGADKLWPLPLHEVNPARVVVAQDGTPLWRFADADGIWRYPVTIEDVSPRYLEALINYEDRWFWKHPGVNPFSVARAAWQDLTSGRVISGGSTLTMQVARLLDPHPKTFGGKIRQLWRALQLEWHLSKREILTLYLNRAPFGGTLQGIGAASWAYLGKSPANLSYSEAAMLAVLPQAPSRLRPDRWPERAEAARNKVLERMAVQGVWSREQVKESREEPIWLAPRQMPQLAPLFSRMMLGKSKSDKITTTLDAGLQRRLEELAQNWKGRLPPRSSLAMIVVDHTDMRVRGWVGSVDLNDDSRFGHVDMVNSIRSPGSVLKPFVYGLALDEGLIHPASLLQDVPRRTGDYRPGNFDSGFHGPISMSEALVRSLNLPAVQVLEAYGPKRFAAKLRNVGLPLYLPNGAAPNLSLILGGAGAKLEDMAAAYTAFARHGKAGKLRLQPDDPLLERPLMSSGAAWIIRRIMADEAQPLPDSALPRVAPLAWKTGTSYGYRDAWAIGVNARYVIGIWTGRPDGTPVVGQFGFASAVPLLNQVNNILLSRSANLPEDPRPNSVTRGVICWPGGQSLPEGDGNCRRRLATWLLDGSQPPTLLLPEQEGINGIRFPIWLDENGKRVAADCPQARQEMINVWPLPLEPWLPASERRAVRLPPASTSCPPYGHDAQLPLQLTGVRDGAIIKRLPGAAEATLPLQSSGGAGERWWFLNGEPLTERGRNVTLHLTDKGDYQLLVMDDVGQIATVKFVMQ.

At 1–8 the chain is on the cytoplasmic side; it reads MPRLLTKR. Residues 9–29 form a helical; Signal-anchor for type II membrane protein membrane-spanning segment; that stretch reads GCWITLAAAPFLLFLAAWGAD. Residues 30–770 lie on the Periplasmic side of the membrane; it reads KLWPLPLHEV…QIATVKFVMQ (741 aa). Residues 43-213 are transglycosylase; the sequence is RVVVAQDGTP…SRLRPDRWPE (171 aa). Glu84 (proton donor; for transglycosylase activity) is an active-site residue. The tract at residues 278-559 is transpeptidase; sequence AGLQRRLEEL…FASAVPLLNQ (282 aa). Ser342 acts as the Acyl-ester intermediate; for transpeptidase activity in catalysis.

The protein in the N-terminal section; belongs to the glycosyltransferase 51 family. In the C-terminal section; belongs to the transpeptidase family.

Its subcellular location is the cell inner membrane. The enzyme catalyses [GlcNAc-(1-&gt;4)-Mur2Ac(oyl-L-Ala-gamma-D-Glu-L-Lys-D-Ala-D-Ala)](n)-di-trans,octa-cis-undecaprenyl diphosphate + beta-D-GlcNAc-(1-&gt;4)-Mur2Ac(oyl-L-Ala-gamma-D-Glu-L-Lys-D-Ala-D-Ala)-di-trans,octa-cis-undecaprenyl diphosphate = [GlcNAc-(1-&gt;4)-Mur2Ac(oyl-L-Ala-gamma-D-Glu-L-Lys-D-Ala-D-Ala)](n+1)-di-trans,octa-cis-undecaprenyl diphosphate + di-trans,octa-cis-undecaprenyl diphosphate + H(+). It participates in cell wall biogenesis; peptidoglycan biosynthesis. With respect to regulation, transglycosylase activity can be inhibited by moenomycin. Its function is as follows. Cell wall formation. The enzyme has a penicillin-insensitive transglycosylase N-terminal domain (formation of linear glycan strands) and a transpeptidase C-terminal domain which may not be functional. The chain is Penicillin-binding protein 1C (pbpC) from Escherichia coli (strain K12).